We begin with the raw amino-acid sequence, 348 residues long: Rhodopsin (348 aa).

At methionine 1 the chain carries N-acetylmethionine. Residues 1 to 36 (MNGTEGLNFYVPFSNKTGVVRSPFEYPQYYLAEPWQ) are Extracellular-facing. N-linked (GlcNAc...) asparagine glycans are attached at residues asparagine 2 and asparagine 15. The chain crosses the membrane as a helical span at residues 37-61 (FSVLAAYMFLLIVLGFPINFLTLYV). Residues 62 to 73 (TVQHKKLRTPLN) lie on the Cytoplasmic side of the membrane. A helical membrane pass occupies residues 74–99 (YILLNLAVANLFMVFGGFTTTLYTSL). Residues 100–111 (HAYFVFGPTGCN) are Extracellular-facing. A disulfide bridge links cysteine 110 with cysteine 187. A helical transmembrane segment spans residues 112 to 133 (LEGFFATLGGEIALWSLVVLAI). Residues 134 to 136 (ERY) carry the 'Ionic lock' involved in activated form stabilization motif. Residues 134 to 152 (ERYVVVCKPMSNFRFGENH) lie on the Cytoplasmic side of the membrane. Residues 153–173 (AIMGLALTWIMAMACAAAPLV) form a helical membrane-spanning segment. The Extracellular segment spans residues 174 to 202 (GWSRYIPEGMQCSCGIDYYTSRQEVNNES). Glutamate 201 is a binding site for Zn(2+). A helical transmembrane segment spans residues 203–227 (FVIYMFVVHFTIPLVIIFFCYGQLV). Residues 228-252 (FTVKEAAAQQQESATTQKAEKEVTR) lie on the Cytoplasmic side of the membrane. Residues 253–274 (MVIIMVVAFLICWVPYASVAFY) traverse the membrane as a helical segment. At 275-286 (IFTHQGSDFGPI) the chain is on the extracellular side. Glutamine 279 is a binding site for Zn(2+). A helical transmembrane segment spans residues 287 to 306 (FMTIPSFFAKSSSIYNPVIY). An N6-(retinylidene)lysine modification is found at lysine 296. The Cytoplasmic segment spans residues 307-348 (IMMNKQFRNCMLTTLCCGRNPLGDDEASTTASKTETSQVAPA). Residues cysteine 322 and cysteine 323 are each lipidated (S-palmitoyl cysteine). Residue serine 334 is modified to Phosphoserine. Residues threonine 335 and threonine 336 each carry the phosphothreonine modification. Serine 338 carries the post-translational modification Phosphoserine. 2 positions are modified to phosphothreonine: threonine 340 and threonine 342. A Phosphoserine modification is found at serine 343.

This sequence belongs to the G-protein coupled receptor 1 family. Opsin subfamily. As to quaternary structure, homodimer. May form a complex composed of RHO, GRK1 and RCVRN in a Ca(2+)-dependent manner; RCVRN prevents the interaction between GRK1 and RHO. Interacts with GRK1. Interacts (phosphorylated form) with SAG. Interacts with GNAT1. Interacts with GNAT3. SAG and G-proteins compete for a common binding site. Interacts with PRCD; the interaction promotes PRCD stability. Forms a complex with ASAP1 and ARF4. Forms a complex with ASAP1, RAB11A, Rabin8/RAB3IP, ARF4 and RAB11FIP3; the complex regulates Golgi-to-cilia rhodopsin/RHO transport in photoreceptors. Post-translationally, contains one covalently linked retinal chromophore. Upon light absorption, the covalently bound 11-cis-retinal is converted to all-trans-retinal. After hydrolysis of the Schiff base and release of the covalently bound all-trans-retinal, active rhodopsin is regenerated by binding of a fresh molecule of 11-cis-retinal.

Its subcellular location is the membrane. The protein resides in the cell projection. It is found in the cilium. It localises to the photoreceptor outer segment. In terms of biological role, photoreceptor required for image-forming vision at low light intensity. Light-induced isomerization of 11-cis to all-trans retinal triggers a conformational change that activates signaling via G-proteins. Signaling mediates the activation of phospholipase C. Subsequent receptor phosphorylation mediates displacement of the bound G-protein alpha subunit by arrestin and terminates signaling. The polypeptide is Rhodopsin (RHO) (Tursiops truncatus (Atlantic bottle-nosed dolphin)).